Consider the following 103-residue polypeptide: Large ribosomal subunit protein eL43 (103 aa).

This sequence belongs to the eukaryotic ribosomal protein eL43 family.

The polypeptide is Large ribosomal subunit protein eL43 (RPL37A) (Tetrahymena thermophila (strain SB210)).